The primary structure comprises 142 residues: Type 3 secretion system pilotin (142 aa).

The first 23 residues, 1–23 (MIRHGSNKLKIFILSILLLTLSG), serve as a signal peptide directing secretion. A lipid anchor (N-palmitoyl cysteine) is attached at Cys-24. A lipid anchor (S-diacylglycerol cysteine) is attached at Cys-24.

This sequence belongs to the MxiM family. Monomer. Interacts with the secretin MxiD/SctC.

The protein resides in the cell outer membrane. Functionally, involved in the synthesis of the type III secretion system (T3SS), also called injectisome, which is used to inject bacterial effector proteins into eukaryotic host cells. Pilot protein that is required for the proper localization of the secretin MxiD/SctC in the outer membrane. Also influences both MxiD/SctC multimerization and stability. Required for both Ipa translocation and tissue culture cell invasion. Binds lipids. The protein is Type 3 secretion system pilotin of Shigella flexneri.